We begin with the raw amino-acid sequence, 87 residues long: Small ribosomal subunit protein uS17 (87 aa).

It belongs to the universal ribosomal protein uS17 family. Part of the 30S ribosomal subunit.

One of the primary rRNA binding proteins, it binds specifically to the 5'-end of 16S ribosomal RNA. The polypeptide is Small ribosomal subunit protein uS17 (Oceanobacillus iheyensis (strain DSM 14371 / CIP 107618 / JCM 11309 / KCTC 3954 / HTE831)).